The primary structure comprises 325 residues: Protein FAM50B (325 aa).

Residue Ala2 is modified to N-acetylalanine. Disordered regions lie at residues 92-111 and 137-160; these read QHLE…EQRR and RRAG…DREE.

The protein belongs to the FAM50 family. In terms of tissue distribution, widely expressed. Mostly abundant in testis and adult and fetal brain.

This is Protein FAM50B (FAM50B) from Homo sapiens (Human).